Reading from the N-terminus, the 233-residue chain is Large ribosomal subunit protein uL1 (233 aa).

It belongs to the universal ribosomal protein uL1 family. In terms of assembly, part of the 50S ribosomal subunit.

In terms of biological role, binds directly to 23S rRNA. The L1 stalk is quite mobile in the ribosome, and is involved in E site tRNA release. Functionally, protein L1 is also a translational repressor protein, it controls the translation of the L11 operon by binding to its mRNA. This Shewanella piezotolerans (strain WP3 / JCM 13877) protein is Large ribosomal subunit protein uL1.